The chain runs to 348 residues: Ion-translocating oxidoreductase complex subunit D (348 aa).

The next 5 membrane-spanning stretches (helical) occupy residues L15–A35, Y36–I56, L67–S87, I88–A108, and V125–I145. T186 carries the FMN phosphoryl threonine modification. A run of 5 helical transmembrane segments spans residues L212–I232, I241–P261, L265–T285, L298–P318, and A320–Q340.

It belongs to the NqrB/RnfD family. In terms of assembly, the complex is composed of six subunits: RnfA, RnfB, RnfC, RnfD, RnfE and RnfG. Requires FMN as cofactor.

Its subcellular location is the cell inner membrane. Its function is as follows. Part of a membrane-bound complex that couples electron transfer with translocation of ions across the membrane. In Actinobacillus pleuropneumoniae serotype 7 (strain AP76), this protein is Ion-translocating oxidoreductase complex subunit D.